Reading from the N-terminus, the 237-residue chain is Leucyl/phenylalanyl-tRNA--protein transferase (237 aa).

It belongs to the L/F-transferase family.

Its subcellular location is the cytoplasm. The catalysed reaction is N-terminal L-lysyl-[protein] + L-leucyl-tRNA(Leu) = N-terminal L-leucyl-L-lysyl-[protein] + tRNA(Leu) + H(+). It catalyses the reaction N-terminal L-arginyl-[protein] + L-leucyl-tRNA(Leu) = N-terminal L-leucyl-L-arginyl-[protein] + tRNA(Leu) + H(+). It carries out the reaction L-phenylalanyl-tRNA(Phe) + an N-terminal L-alpha-aminoacyl-[protein] = an N-terminal L-phenylalanyl-L-alpha-aminoacyl-[protein] + tRNA(Phe). Functions in the N-end rule pathway of protein degradation where it conjugates Leu, Phe and, less efficiently, Met from aminoacyl-tRNAs to the N-termini of proteins containing an N-terminal arginine or lysine. The protein is Leucyl/phenylalanyl-tRNA--protein transferase of Shewanella baltica (strain OS223).